The primary structure comprises 130 residues: MRKKKKKIVLSSTSEAEKVSIPYLPDDLLLNCLARISRLYYPTLSLVSKRFRSLLASTELYETRRLLGTSESCLYFFMTERRNDHEVYGKVEWCHVVHTLPLFNLSRALSCYHCLSHCFLMIIYIILFSI.

The F-box domain maps to 18-64 (KVSIPYLPDDLLLNCLARISRLYYPTLSLVSKRFRSLLASTELYETR).

This is Putative F-box protein At1g77880 from Arabidopsis thaliana (Mouse-ear cress).